The sequence spans 282 residues: Proteasome subunit beta (282 aa).

Positions 1–55 (MDNSSTGRYPAASLPPAYLRPGSSSFTDFLRAQAPELLPTARSFPEGSVVQAAHG) are cleaved as a propeptide — removed in mature form; by autocatalysis. T56 functions as the Nucleophile in the catalytic mechanism.

This sequence belongs to the peptidase T1B family. As to quaternary structure, the 20S proteasome core is composed of 14 alpha and 14 beta subunits that assemble into four stacked heptameric rings, resulting in a barrel-shaped structure. The two inner rings, each composed of seven catalytic beta subunits, are sandwiched by two outer rings, each composed of seven alpha subunits. The catalytic chamber with the active sites is on the inside of the barrel. Has a gated structure, the ends of the cylinder being occluded by the N-termini of the alpha-subunits. Is capped by the proteasome-associated ATPase, ARC.

The protein localises to the cytoplasm. It carries out the reaction Cleavage of peptide bonds with very broad specificity.. The protein operates within protein degradation; proteasomal Pup-dependent pathway. With respect to regulation, the formation of the proteasomal ATPase ARC-20S proteasome complex, likely via the docking of the C-termini of ARC into the intersubunit pockets in the alpha-rings, may trigger opening of the gate for substrate entry. Interconversion between the open-gate and close-gate conformations leads to a dynamic regulation of the 20S proteasome proteolysis activity. Component of the proteasome core, a large protease complex with broad specificity involved in protein degradation. This chain is Proteasome subunit beta, found in Actinosynnema mirum (strain ATCC 29888 / DSM 43827 / JCM 3225 / NBRC 14064 / NCIMB 13271 / NRRL B-12336 / IMRU 3971 / 101).